Here is a 245-residue protein sequence, read N- to C-terminus: Probable phosphatase YcdX (245 aa).

Residues His-7, His-9, His-15, His-40, Glu-73, His-101, His-131, Asp-192, and His-194 each coordinate Zn(2+).

This sequence belongs to the PHP family. As to quaternary structure, homotrimer. The cofactor is Zn(2+).

The protein is Probable phosphatase YcdX of Escherichia coli O81 (strain ED1a).